Here is a 55-residue protein sequence, read N- to C-terminus: Large ribosomal subunit protein bL33 (55 aa).

This sequence belongs to the bacterial ribosomal protein bL33 family.

The sequence is that of Large ribosomal subunit protein bL33 from Paenarthrobacter aurescens (strain TC1).